The primary structure comprises 1158 residues: Phospholipid-transporting ATPase 1 (1158 aa).

Residues 1–15 (MDPRKSIDKPPHHDP) are compositionally biased toward basic and acidic residues. Residues 1 to 30 (MDPRKSIDKPPHHDPILGVSSRWSVSSKDN) are disordered. The Cytoplasmic portion of the chain corresponds to 1–100 (MDPRKSIDKP…TAKYSVFTFL (100 aa)). Residues 101-122 (PRNLFEQFHRVAYIYFLVIAVL) form a helical membrane-spanning segment. Residues 123–127 (NQLPQ) lie on the Extracellular side of the membrane. Residues 128–150 (LAVFGRGASIMPLAFVLLVSAIK) traverse the membrane as a helical segment. Over 151-329 (DAYEDFRRHR…SRLETRMNLE (179 aa)) the chain is Cytoplasmic. The helical transmembrane segment at 330–351 (IILLSLFLIVLCTIAAATAAVW) threads the bilayer. At 352–391 (LRTHRDDLDTILFYRRKDYSERPGGKNYKYYGWGWEIFFT) the chain is on the extracellular side. Residues 392–409 (FFMAVIVYQIMIPISLYI) form a helical membrane-spanning segment. Topologically, residues 410 to 914 (SMELVRIGQA…HGHWNYQRMG (505 aa)) are cytoplasmic. Catalysis depends on Asp-457, which acts as the 4-aspartylphosphate intermediate. Asp-859 and Asp-863 together coordinate Mg(2+). A helical transmembrane segment spans residues 915–934 (YMILYNFYRNAVFVLILFWY). Residues 935-948 (VLFTCYTLTTAITE) lie on the Extracellular side of the membrane. A helical membrane pass occupies residues 949 to 968 (WSSVLYSVIYTAIPTIIIGI). The Cytoplasmic portion of the chain corresponds to 969–998 (LDKDLGRQTLLDHPQLYGVGQRAEGYSTTL). A helical transmembrane segment spans residues 999 to 1020 (FWYTMIDTIWQSAAIFFIPMFA). Topologically, residues 1021-1027 (YWGSTID) are extracellular. The helical transmembrane segment at 1028–1050 (TSSLGDLWTIAAVVVVNLHLAMD) threads the bilayer. Residues 1051–1056 (VIRWNW) are Cytoplasmic-facing. Residues 1057–1077 (ITHAAIWGSIVAACICVIVID) form a helical membrane-spanning segment. At 1078 to 1090 (VIPTLPGYWAIFQ) the chain is on the extracellular side. A helical transmembrane segment spans residues 1091–1115 (VGKTWMFWFCLLAIVVTSLLPRFAI). Residues 1116 to 1158 (KFLVEYYRPSDVRIAREAEKLGTFRESQPVGVEMNLIQDPPRR) lie on the Cytoplasmic side of the membrane.

The protein belongs to the cation transport ATPase (P-type) (TC 3.A.3) family. Type IV subfamily. As to expression, expressed in roots, flowers, anthers, leaves, vascular tissues and stems.

It is found in the endoplasmic reticulum membrane. The protein localises to the cell membrane. The catalysed reaction is ATP + H2O + phospholipidSide 1 = ADP + phosphate + phospholipidSide 2.. In terms of biological role, involved in transport of phospholipids. Contributes to transmembrane flipping of lipids. Has activity with phosphatidylserine and with a much lower efficiency with phosphatidylethanolamine, but not with phosphatidylcholine. The polypeptide is Phospholipid-transporting ATPase 1 (Arabidopsis thaliana (Mouse-ear cress)).